The following is a 471-amino-acid chain: Glutamyl-tRNA(Gln) amidotransferase subunit A, mitochondrial (471 aa).

Active-site charge relay system residues include K64 and S141. S165 functions as the Acyl-ester intermediate in the catalytic mechanism.

The protein belongs to the amidase family. GatA subfamily. As to quaternary structure, subunit of the heterotrimeric GatCAB amidotransferase (AdT) complex, composed of A, B and C subunits.

Its subcellular location is the mitochondrion. The enzyme catalyses L-glutamyl-tRNA(Gln) + L-glutamine + ATP + H2O = L-glutaminyl-tRNA(Gln) + L-glutamate + ADP + phosphate + H(+). Allows the formation of correctly charged Gln-tRNA(Gln) through the transamidation of misacylated Glu-tRNA(Gln) in the mitochondria. The reaction takes place in the presence of glutamine and ATP through an activated gamma-phospho-Glu-tRNA(Gln). This chain is Glutamyl-tRNA(Gln) amidotransferase subunit A, mitochondrial, found in Schizosaccharomyces pombe (strain 972 / ATCC 24843) (Fission yeast).